Consider the following 1446-residue polypeptide: ABC transporter G family member 53 (1446 aa).

In terms of domain architecture, ABC transporter 1 spans 153 to 426 (ANTLHITPNR…FESVGFKCPE (274 aa)). 186–193 (GPPGAGKT) is an ATP binding site. The ABC transmembrane type-2 1 domain maps to 504–717 (ELLKANIDRE…AQNAISVNEF (214 aa)). 6 consecutive transmembrane segments (helical) span residues 523 to 543 (VYIF…TVFI), 555 to 575 (GGIY…NGLA), 610 to 630 (TPLS…VIGF), 641 to 661 (FLLL…IAGF), 666 to 686 (VVAS…GGFI), and 752 to 772 (IGVG…TICL). The ABC transporter 2 domain occupies 849 to 1101 (ITFEDIRYSV…ELIRYFESIE (253 aa)). An ATP-binding site is contributed by 894-901 (GVSGAGKT). An ABC transmembrane type-2 2 domain is found at 1174-1388 (TQCLACLWKQ…TLYGLVTSQF (215 aa)). 7 helical membrane passes run 1195 to 1215 (AVKY…FWGV), 1225 to 1242 (LFNA…MGVQ), 1281 to 1301 (LPYI…MIGF), 1308 to 1328 (FFWY…YGMM), 1338 to 1358 (VASV…GFII), 1363 to 1383 (IPIW…LYGL), and 1415 to 1435 (FLWV…FLFG).

Belongs to the ABC transporter superfamily. ABCG family. PDR (TC 3.A.1.205) subfamily.

The protein localises to the membrane. May be a general defense protein. This chain is ABC transporter G family member 53, found in Oryza sativa subsp. japonica (Rice).